The following is a 184-amino-acid chain: NADH-quinone oxidoreductase subunit B (184 aa).

The [4Fe-4S] cluster site is built by Cys37, Cys38, Cys103, and Cys132.

Belongs to the complex I 20 kDa subunit family. NDH-1 is composed of 14 different subunits. Subunits NuoB, C, D, E, F, and G constitute the peripheral sector of the complex. The cofactor is [4Fe-4S] cluster.

It localises to the cell membrane. The catalysed reaction is a quinone + NADH + 5 H(+)(in) = a quinol + NAD(+) + 4 H(+)(out). In terms of biological role, NDH-1 shuttles electrons from NADH, via FMN and iron-sulfur (Fe-S) centers, to quinones in the respiratory chain. The immediate electron acceptor for the enzyme in this species is believed to be a menaquinone. Couples the redox reaction to proton translocation (for every two electrons transferred, four hydrogen ions are translocated across the cytoplasmic membrane), and thus conserves the redox energy in a proton gradient. The protein is NADH-quinone oxidoreductase subunit B of Mycolicibacterium gilvum (strain PYR-GCK) (Mycobacterium gilvum (strain PYR-GCK)).